The following is a 159-amino-acid chain: Ribosomal RNA large subunit methyltransferase H (159 aa).

Residues leucine 76 and glycine 108 each contribute to the S-adenosyl-L-methionine site.

It belongs to the RNA methyltransferase RlmH family. As to quaternary structure, homodimer.

Its subcellular location is the cytoplasm. It carries out the reaction pseudouridine(1915) in 23S rRNA + S-adenosyl-L-methionine = N(3)-methylpseudouridine(1915) in 23S rRNA + S-adenosyl-L-homocysteine + H(+). Specifically methylates the pseudouridine at position 1915 (m3Psi1915) in 23S rRNA. The chain is Ribosomal RNA large subunit methyltransferase H from Natranaerobius thermophilus (strain ATCC BAA-1301 / DSM 18059 / JW/NM-WN-LF).